We begin with the raw amino-acid sequence, 139 residues long: Protein PsiE homolog (139 aa).

4 helical membrane passes run 20 to 40, 60 to 80, 85 to 105, and 111 to 131; these read IVLC…LVKI, AEQA…VQYF, HFPL…LIIV, and VDTI…CLVL.

It belongs to the PsiE family.

The protein resides in the cell inner membrane. This chain is Protein PsiE homolog, found in Haemophilus influenzae (strain 86-028NP).